The following is a 571-amino-acid chain: Proline--tRNA ligase (571 aa).

It belongs to the class-II aminoacyl-tRNA synthetase family. ProS type 1 subfamily. As to quaternary structure, homodimer.

It localises to the cytoplasm. The enzyme catalyses tRNA(Pro) + L-proline + ATP = L-prolyl-tRNA(Pro) + AMP + diphosphate. Catalyzes the attachment of proline to tRNA(Pro) in a two-step reaction: proline is first activated by ATP to form Pro-AMP and then transferred to the acceptor end of tRNA(Pro). As ProRS can inadvertently accommodate and process non-cognate amino acids such as alanine and cysteine, to avoid such errors it has two additional distinct editing activities against alanine. One activity is designated as 'pretransfer' editing and involves the tRNA(Pro)-independent hydrolysis of activated Ala-AMP. The other activity is designated 'posttransfer' editing and involves deacylation of mischarged Ala-tRNA(Pro). The misacylated Cys-tRNA(Pro) is not edited by ProRS. This Shewanella baltica (strain OS195) protein is Proline--tRNA ligase.